The primary structure comprises 142 residues: Putative pre-16S rRNA nuclease (142 aa).

Belongs to the YqgF nuclease family.

The protein localises to the cytoplasm. Its function is as follows. Could be a nuclease involved in processing of the 5'-end of pre-16S rRNA. This chain is Putative pre-16S rRNA nuclease, found in Mesoplasma florum (strain ATCC 33453 / NBRC 100688 / NCTC 11704 / L1) (Acholeplasma florum).